Consider the following 175-residue polypeptide: VQ motif-containing protein 25 (175 aa).

A VQ motif is present at residues 50-59 (FRELVQSLTG).

Its subcellular location is the nucleus. In terms of biological role, may function as negative regulator of plant defense. This Arabidopsis thaliana (Mouse-ear cress) protein is VQ motif-containing protein 25.